The sequence spans 434 residues: Glutamate-1-semialdehyde 2,1-aminomutase 2 (434 aa).

Lys269 carries the post-translational modification N6-(pyridoxal phosphate)lysine.

Belongs to the class-III pyridoxal-phosphate-dependent aminotransferase family. HemL subfamily. As to quaternary structure, homodimer. The cofactor is pyridoxal 5'-phosphate.

Its subcellular location is the cytoplasm. It catalyses the reaction (S)-4-amino-5-oxopentanoate = 5-aminolevulinate. It functions in the pathway porphyrin-containing compound metabolism; protoporphyrin-IX biosynthesis; 5-aminolevulinate from L-glutamyl-tRNA(Glu): step 2/2. The chain is Glutamate-1-semialdehyde 2,1-aminomutase 2 from Exiguobacterium sp. (strain ATCC BAA-1283 / AT1b).